Reading from the N-terminus, the 185-residue chain is dCTP deaminase (185 aa).

Residues 107–112 (KSTYAR), 131–133 (TLE), Gln-152, Tyr-166, and Gln-176 contribute to the dCTP site. The active-site Proton donor/acceptor is Glu-133.

This sequence belongs to the dCTP deaminase family. In terms of assembly, homotrimer.

The catalysed reaction is dCTP + H2O + H(+) = dUTP + NH4(+). The protein operates within pyrimidine metabolism; dUMP biosynthesis; dUMP from dCTP (dUTP route): step 1/2. In terms of biological role, catalyzes the deamination of dCTP to dUTP. The protein is dCTP deaminase of Anaplasma marginale (strain Florida).